Here is an 89-residue protein sequence, read N- to C-terminus: Small ribosomal subunit protein uS15 (89 aa).

It belongs to the universal ribosomal protein uS15 family. Part of the 30S ribosomal subunit. Forms a bridge to the 50S subunit in the 70S ribosome, contacting the 23S rRNA.

In terms of biological role, one of the primary rRNA binding proteins, it binds directly to 16S rRNA where it helps nucleate assembly of the platform of the 30S subunit by binding and bridging several RNA helices of the 16S rRNA. Its function is as follows. Forms an intersubunit bridge (bridge B4) with the 23S rRNA of the 50S subunit in the ribosome. The chain is Small ribosomal subunit protein uS15 from Bacteroides fragilis (strain ATCC 25285 / DSM 2151 / CCUG 4856 / JCM 11019 / LMG 10263 / NCTC 9343 / Onslow / VPI 2553 / EN-2).